Here is a 360-residue protein sequence, read N- to C-terminus: Phosphoserine aminotransferase (360 aa).

Arg42 serves as a coordination point for L-glutamate. Pyridoxal 5'-phosphate-binding positions include 76-77, Trp102, Thr152, Asp172, and Gln195; that span reads AS. An N6-(pyridoxal phosphate)lysine modification is found at Lys196. Residue 237-238 participates in pyridoxal 5'-phosphate binding; it reads NT.

The protein belongs to the class-V pyridoxal-phosphate-dependent aminotransferase family. SerC subfamily. As to quaternary structure, homodimer. The cofactor is pyridoxal 5'-phosphate.

It localises to the cytoplasm. It carries out the reaction O-phospho-L-serine + 2-oxoglutarate = 3-phosphooxypyruvate + L-glutamate. The catalysed reaction is 4-(phosphooxy)-L-threonine + 2-oxoglutarate = (R)-3-hydroxy-2-oxo-4-phosphooxybutanoate + L-glutamate. It functions in the pathway amino-acid biosynthesis; L-serine biosynthesis; L-serine from 3-phospho-D-glycerate: step 2/3. Its function is as follows. Catalyzes the reversible conversion of 3-phosphohydroxypyruvate to phosphoserine and of 3-hydroxy-2-oxo-4-phosphonooxybutanoate to phosphohydroxythreonine. The sequence is that of Phosphoserine aminotransferase from Bacillus thuringiensis subsp. konkukian (strain 97-27).